Reading from the N-terminus, the 414-residue chain is tRNA (guanine-N(7)-)-methyltransferase non-catalytic subunit WDR4 (414 aa).

At alanine 2 the chain carries N-acetylalanine. 4 WD repeats span residues 60-99, 101-140, 144-184, and 187-227; these read QGSD…CLSV, TVVR…GGGR, GHLS…IESF, and GHTE…ELHC. The interval 377–414 is disordered; it reads EERLQQQLEKKRRQAPPPGPNGPTKKMRAGELAQGCSS.

The protein belongs to the WD repeat TRM82 family. As to quaternary structure, non-catalytic component of the METTL1-WDR4 complex, composed of METTL1 and WDR4. Interacts with FEN1; the interaction is direct.

It localises to the nucleus. Its subcellular location is the chromosome. It participates in tRNA modification; N(7)-methylguanine-tRNA biosynthesis. Its function is as follows. Non-catalytic component of the METTL1-WDR4 methyltransferase complex required for the formation of N(7)-methylguanine in a subset of RNA species, such as tRNAs, mRNAs and microRNAs (miRNAs). In the METTL1-WDR4 methyltransferase complex, WDR4 acts as a scaffold for tRNA-binding. Required for the formation of N(7)-methylguanine at position 46 (m7G46) in a large subset of tRNAs that contain the 5'-RAGGU-3' motif within the variable loop. M7G46 interacts with C13-G22 in the D-loop to stabilize tRNA tertiary structure and protect tRNAs from decay. Also required for the formation of N(7)-methylguanine at internal sites in a subset of mRNAs. Also required for methylation of a specific subset of miRNAs, such as let-7. Independently of METTL1, also plays a role in genome stability: localizes at the DNA replication site and regulates endonucleolytic activities of FEN1. The polypeptide is tRNA (guanine-N(7)-)-methyltransferase non-catalytic subunit WDR4 (Bos taurus (Bovine)).